We begin with the raw amino-acid sequence, 391 residues long: Chaperone protein DnaJ (391 aa).

Residues 6–70 (DYYEILEVSR…EKRKLYDTYG (65 aa)) form the J domain. The segment at 145–226 (GCIKNVKYTR…CKSRRMVDEV (82 aa)) adopts a CR-type zinc-finger fold. Zn(2+) contacts are provided by Cys158, Cys161, Cys174, Cys177, Cys200, Cys203, Cys214, and Cys217. CXXCXGXG motif repeat units follow at residues 158–165 (CPDCNGSG), 174–181 (CSDCNGEG), 200–207 (CPSCKGEG), and 214–221 (CKKCKSRR).

This sequence belongs to the DnaJ family. In terms of assembly, homodimer. The cofactor is Zn(2+).

It is found in the cytoplasm. Its function is as follows. Participates actively in the response to hyperosmotic and heat shock by preventing the aggregation of stress-denatured proteins and by disaggregating proteins, also in an autonomous, DnaK-independent fashion. Unfolded proteins bind initially to DnaJ; upon interaction with the DnaJ-bound protein, DnaK hydrolyzes its bound ATP, resulting in the formation of a stable complex. GrpE releases ADP from DnaK; ATP binding to DnaK triggers the release of the substrate protein, thus completing the reaction cycle. Several rounds of ATP-dependent interactions between DnaJ, DnaK and GrpE are required for fully efficient folding. Also involved, together with DnaK and GrpE, in the DNA replication of plasmids through activation of initiation proteins. The chain is Chaperone protein DnaJ from Mycoplasmoides gallisepticum (strain R(low / passage 15 / clone 2)) (Mycoplasma gallisepticum).